Reading from the N-terminus, the 248-residue chain is 2,3-bisphosphoglycerate-dependent phosphoglycerate mutase (248 aa).

Substrate contacts are provided by residues 9–16 (RHGHSEWN), 22–23 (TG), R61, 88–91 (ERHY), K99, 115–116 (RR), and 183–184 (GN). Residue H10 is the Tele-phosphohistidine intermediate of the active site. E88 serves as the catalytic Proton donor/acceptor.

It belongs to the phosphoglycerate mutase family. BPG-dependent PGAM subfamily.

The enzyme catalyses (2R)-2-phosphoglycerate = (2R)-3-phosphoglycerate. The protein operates within carbohydrate degradation; glycolysis; pyruvate from D-glyceraldehyde 3-phosphate: step 3/5. In terms of biological role, catalyzes the interconversion of 2-phosphoglycerate and 3-phosphoglycerate. This Arthrobacter sp. (strain FB24) protein is 2,3-bisphosphoglycerate-dependent phosphoglycerate mutase.